The sequence spans 357 residues: tRNA pseudouridine synthase D (357 aa).

Catalysis depends on aspartate 76, which acts as the Nucleophile. In terms of domain architecture, TRUD spans 151–331 (GMPNYFGYQR…DGRYKDEEAQ (181 aa)).

The protein belongs to the pseudouridine synthase TruD family.

It catalyses the reaction uridine(13) in tRNA = pseudouridine(13) in tRNA. Functionally, responsible for synthesis of pseudouridine from uracil-13 in transfer RNAs. The polypeptide is tRNA pseudouridine synthase D (Sulfurimonas denitrificans (strain ATCC 33889 / DSM 1251) (Thiomicrospira denitrificans (strain ATCC 33889 / DSM 1251))).